Consider the following 166-residue polypeptide: MHRRAIYPGTFDPITNGHADLIERAANLFSEIVVGIAESPSKKPLFSLEERVLLAQQVTENLDNVTVVGFSGLLVNFAKEYEATVLIRGLRAVSDFEYEFQLANMNRRLAPNLESVFLTPAEENSFISSSLVKEVALHGGDVSGFTDARVASALEQKFSGKRPGKS.

Thr-10 serves as a coordination point for substrate. Residues 10–11 (TF) and His-18 each bind ATP. Lys-42, Leu-74, and Arg-88 together coordinate substrate. Residues 89 to 91 (GLR), Glu-99, and 124 to 130 (NSFISSS) contribute to the ATP site.

This sequence belongs to the bacterial CoaD family. As to quaternary structure, homohexamer. Mg(2+) serves as cofactor.

Its subcellular location is the cytoplasm. The catalysed reaction is (R)-4'-phosphopantetheine + ATP + H(+) = 3'-dephospho-CoA + diphosphate. Its pathway is cofactor biosynthesis; coenzyme A biosynthesis; CoA from (R)-pantothenate: step 4/5. In terms of biological role, reversibly transfers an adenylyl group from ATP to 4'-phosphopantetheine, yielding dephospho-CoA (dPCoA) and pyrophosphate. This Idiomarina loihiensis (strain ATCC BAA-735 / DSM 15497 / L2-TR) protein is Phosphopantetheine adenylyltransferase.